The following is a 114-amino-acid chain: Large ribosomal subunit protein bL19 (114 aa).

The protein belongs to the bacterial ribosomal protein bL19 family.

This protein is located at the 30S-50S ribosomal subunit interface and may play a role in the structure and function of the aminoacyl-tRNA binding site. This chain is Large ribosomal subunit protein bL19, found in Halalkalibacterium halodurans (strain ATCC BAA-125 / DSM 18197 / FERM 7344 / JCM 9153 / C-125) (Bacillus halodurans).